Here is a 279-residue protein sequence, read N- to C-terminus: Fatty acid metabolism regulator protein (279 aa).

The region spanning 6–74 (KSPAGFAEKY…HGKPTKVNQF (69 aa)) is the HTH gntR-type domain. Residues 34–53 (ERELSELIGVTRTTLREVLQ) constitute a DNA-binding region (H-T-H motif).

As to quaternary structure, homodimer.

Its subcellular location is the cytoplasm. In terms of biological role, multifunctional regulator of fatty acid metabolism. This is Fatty acid metabolism regulator protein from Vibrio parahaemolyticus serotype O3:K6 (strain RIMD 2210633).